The following is a 308-amino-acid chain: Transaldolase (308 aa).

Lys125 acts as the Schiff-base intermediate with substrate in catalysis.

This sequence belongs to the transaldolase family. Type 1 subfamily. In terms of assembly, homodimer.

The protein localises to the cytoplasm. The catalysed reaction is D-sedoheptulose 7-phosphate + D-glyceraldehyde 3-phosphate = D-erythrose 4-phosphate + beta-D-fructose 6-phosphate. Its pathway is carbohydrate degradation; pentose phosphate pathway; D-glyceraldehyde 3-phosphate and beta-D-fructose 6-phosphate from D-ribose 5-phosphate and D-xylulose 5-phosphate (non-oxidative stage): step 2/3. Transaldolase is important for the balance of metabolites in the pentose-phosphate pathway. This Pseudomonas putida (strain ATCC 47054 / DSM 6125 / CFBP 8728 / NCIMB 11950 / KT2440) protein is Transaldolase.